The sequence spans 154 residues: Ribosome maturation factor RimP (154 aa).

It belongs to the RimP family.

The protein localises to the cytoplasm. Its function is as follows. Required for maturation of 30S ribosomal subunits. This Alkaliphilus oremlandii (strain OhILAs) (Clostridium oremlandii (strain OhILAs)) protein is Ribosome maturation factor RimP.